Reading from the N-terminus, the 700-residue chain is Elongation factor G 1 (700 aa).

Residues 8–290 enclose the tr-type G domain; that stretch reads QNYRNIGISA…AVIEFMPSPI (283 aa). Residues 17–24, 88–92, and 142–145 contribute to the GTP site; these read AHIDAGKT, DTPGH, and NKMD.

The protein belongs to the TRAFAC class translation factor GTPase superfamily. Classic translation factor GTPase family. EF-G/EF-2 subfamily.

It localises to the cytoplasm. Catalyzes the GTP-dependent ribosomal translocation step during translation elongation. During this step, the ribosome changes from the pre-translocational (PRE) to the post-translocational (POST) state as the newly formed A-site-bound peptidyl-tRNA and P-site-bound deacylated tRNA move to the P and E sites, respectively. Catalyzes the coordinated movement of the two tRNA molecules, the mRNA and conformational changes in the ribosome. The polypeptide is Elongation factor G 1 (Polaromonas sp. (strain JS666 / ATCC BAA-500)).